A 312-amino-acid polypeptide reads, in one-letter code: Olfactory receptor 6C1 (312 aa).

Residues 1–23 are Extracellular-facing; sequence MRNHTEITEFILLGLTDDPNFQV. N-linked (GlcNAc...) asparagine glycosylation occurs at N3. The chain crosses the membrane as a helical span at residues 24-44; the sequence is VIFVFLLITYMLSITGNLTLI. Residues 45–52 lie on the Cytoplasmic side of the membrane; it reads TITLLDSH. Residues 53–73 form a helical membrane-spanning segment; the sequence is LQTPMYFFLRNFSILEISFTT. Residues 74-97 are Extracellular-facing; sequence VSIPKFLGNIISGDKTISFNNCIV. C95 and C187 are disulfide-bonded. The chain crosses the membrane as a helical span at residues 98-118; sequence QLFFFILLGVTEFYLLAAMSY. Residues 119-137 lie on the Cytoplasmic side of the membrane; that stretch reads DRYVAICKPLHCLSIMNRR. Residues 138–158 form a helical membrane-spanning segment; it reads VCTLLVFTSWLVSFLIIFPAL. The Extracellular segment spans residues 159-195; sequence MLLLKLHYCRSNIIDHFTCDYFPLLQLACSDTKFLEV. A helical membrane pass occupies residues 196-215; it reads MGFSCAAFTLMFTLALIFLS. At 216-235 the chain is on the cytoplasmic side; the sequence is YIYIIRTILRIPSTSQRTKA. A helical transmembrane segment spans residues 236-256; that stretch reads FSTCSSHMVVVSISYGSCIFM. The Extracellular portion of the chain corresponds to 257-269; that stretch reads YIKPSAKDRVSLS. The chain crosses the membrane as a helical span at residues 270–290; sequence KGVAILNTSVAPMMNPFIYSL. Residues 291–312 lie on the Cytoplasmic side of the membrane; the sequence is RNQQVKQAFINMARKTVFFTST.

The protein belongs to the G-protein coupled receptor 1 family.

The protein localises to the cell membrane. In terms of biological role, odorant receptor. The sequence is that of Olfactory receptor 6C1 (OR6C1) from Homo sapiens (Human).